Consider the following 359-residue polypeptide: Carbamoyl phosphate synthase small chain (359 aa).

A CPSase region spans residues 1–169; that stretch reads MTKRILVLED…TKTSYPAPGV (169 aa). L-glutamine-binding residues include Ser-46, Gly-220, and Gly-222. The 187-residue stretch at 172-358 folds into the Glutamine amidotransferase type-1 domain; that stretch reads SVVLVDFGLK…IEMMEVFKQS (187 aa). Cys-247 functions as the Nucleophile in the catalytic mechanism. Positions 248, 251, 289, 291, and 292 each coordinate L-glutamine. Catalysis depends on residues His-331 and Asp-333.

It belongs to the CarA family. As to quaternary structure, composed of two chains; the small (or glutamine) chain promotes the hydrolysis of glutamine to ammonia, which is used by the large (or ammonia) chain to synthesize carbamoyl phosphate. Tetramer of heterodimers (alpha,beta)4.

The enzyme catalyses hydrogencarbonate + L-glutamine + 2 ATP + H2O = carbamoyl phosphate + L-glutamate + 2 ADP + phosphate + 2 H(+). It carries out the reaction L-glutamine + H2O = L-glutamate + NH4(+). It functions in the pathway amino-acid biosynthesis; L-arginine biosynthesis; carbamoyl phosphate from bicarbonate: step 1/1. Its pathway is pyrimidine metabolism; UMP biosynthesis via de novo pathway; (S)-dihydroorotate from bicarbonate: step 1/3. Small subunit of the glutamine-dependent carbamoyl phosphate synthetase (CPSase). CPSase catalyzes the formation of carbamoyl phosphate from the ammonia moiety of glutamine, carbonate, and phosphate donated by ATP, constituting the first step of 2 biosynthetic pathways, one leading to arginine and/or urea and the other to pyrimidine nucleotides. The small subunit (glutamine amidotransferase) binds and cleaves glutamine to supply the large subunit with the substrate ammonia. The sequence is that of Carbamoyl phosphate synthase small chain from Streptococcus pneumoniae (strain ATCC BAA-255 / R6).